The sequence spans 220 residues: Ribosome maturation factor RimM (220 aa).

The PRC barrel domain maps to 143 to 220; sequence EGEFYWVDLI…RIVVDWGLDY (78 aa).

Belongs to the RimM family. In terms of assembly, binds ribosomal protein uS19.

The protein resides in the cytoplasm. In terms of biological role, an accessory protein needed during the final step in the assembly of 30S ribosomal subunit, possibly for assembly of the head region. Essential for efficient processing of 16S rRNA. May be needed both before and after RbfA during the maturation of 16S rRNA. It has affinity for free ribosomal 30S subunits but not for 70S ribosomes. This Cupriavidus metallidurans (strain ATCC 43123 / DSM 2839 / NBRC 102507 / CH34) (Ralstonia metallidurans) protein is Ribosome maturation factor RimM.